The primary structure comprises 163 residues: ATP synthase subunit b 1 (163 aa).

A helical transmembrane segment spans residues 7–27 (AETWVAIAFVILLGVFAYLGV).

The protein belongs to the ATPase B chain family. F-type ATPases have 2 components, F(1) - the catalytic core - and F(0) - the membrane proton channel. F(1) has five subunits: alpha(3), beta(3), gamma(1), delta(1), epsilon(1). F(0) has three main subunits: a(1), b(2) and c(10-14). The alpha and beta chains form an alternating ring which encloses part of the gamma chain. F(1) is attached to F(0) by a central stalk formed by the gamma and epsilon chains, while a peripheral stalk is formed by the delta and b chains.

The protein localises to the cell inner membrane. Functionally, f(1)F(0) ATP synthase produces ATP from ADP in the presence of a proton or sodium gradient. F-type ATPases consist of two structural domains, F(1) containing the extramembraneous catalytic core and F(0) containing the membrane proton channel, linked together by a central stalk and a peripheral stalk. During catalysis, ATP synthesis in the catalytic domain of F(1) is coupled via a rotary mechanism of the central stalk subunits to proton translocation. Component of the F(0) channel, it forms part of the peripheral stalk, linking F(1) to F(0). This Rhodopseudomonas palustris (strain ATCC BAA-98 / CGA009) protein is ATP synthase subunit b 1.